The sequence spans 327 residues: GMP reductase (327 aa).

The active-site Thioimidate intermediate is C175. Residue 204-227 (IIADGGIRTNGDVAKSIRFGATMV) participates in NADP(+) binding.

Belongs to the IMPDH/GMPR family. GuaC type 2 subfamily.

It catalyses the reaction IMP + NH4(+) + NADP(+) = GMP + NADPH + 2 H(+). Functionally, catalyzes the irreversible NADPH-dependent deamination of GMP to IMP. It functions in the conversion of nucleobase, nucleoside and nucleotide derivatives of G to A nucleotides, and in maintaining the intracellular balance of A and G nucleotides. This Bacillus anthracis protein is GMP reductase.